The following is a 291-amino-acid chain: Putative ribosomal protein uL16-like, mitochondrial (291 aa).

A mitochondrion-targeting transit peptide spans Met-1–Leu-27. Residues Val-127–Gln-137 show a composition bias toward basic and acidic residues. The disordered stretch occupies residues Val-127–Arg-173. Residues Arg-163–Arg-173 are compositionally biased toward basic residues.

Belongs to the universal ribosomal protein uL16 family.

The protein resides in the mitochondrion. In terms of biological role, could be a component of the large subunit of mitochondrial ribosome. The protein is Putative ribosomal protein uL16-like, mitochondrial of Arabidopsis thaliana (Mouse-ear cress).